The following is a 144-amino-acid chain: Transcriptional regulator MraZ (144 aa).

SpoVT-AbrB domains are found at residues 5-47 (TYTP…PRAE) and 77-120 (TDEQ…DAQA).

It belongs to the MraZ family. In terms of assembly, forms oligomers.

The protein localises to the cytoplasm. It localises to the nucleoid. In Mycolicibacterium vanbaalenii (strain DSM 7251 / JCM 13017 / BCRC 16820 / KCTC 9966 / NRRL B-24157 / PYR-1) (Mycobacterium vanbaalenii), this protein is Transcriptional regulator MraZ.